The sequence spans 152 residues: MSQEIRAIVRIGDTDLDGNKQVAYALAKIRGIGIASAYAICWKLGIDPHAILGALPEDQINKLDWAVRNLHELAPAWFLNRRKDPETGRDLHLIGSELVLAAKRDVDLMKKLKSWKGVRHSLGLKVRGQRTVTTGRFGATAGVTKKKAAAGK.

This sequence belongs to the universal ribosomal protein uS13 family. Part of the 30S ribosomal subunit. Forms a loose heterodimer with protein S19. Forms two bridges to the 50S subunit in the 70S ribosome.

Located at the top of the head of the 30S subunit, it contacts several helices of the 16S rRNA. In the 70S ribosome it contacts the 23S rRNA (bridge B1a) and protein L5 of the 50S subunit (bridge B1b), connecting the 2 subunits; these bridges are implicated in subunit movement. The polypeptide is Small ribosomal subunit protein uS13 (Pyrobaculum aerophilum (strain ATCC 51768 / DSM 7523 / JCM 9630 / CIP 104966 / NBRC 100827 / IM2)).